Reading from the N-terminus, the 325-residue chain is Tetraacyldisaccharide 4'-kinase (325 aa).

53 to 60 (SVGGNGKT) contributes to the ATP binding site.

Belongs to the LpxK family.

The catalysed reaction is a lipid A disaccharide + ATP = a lipid IVA + ADP + H(+). The protein operates within glycolipid biosynthesis; lipid IV(A) biosynthesis; lipid IV(A) from (3R)-3-hydroxytetradecanoyl-[acyl-carrier-protein] and UDP-N-acetyl-alpha-D-glucosamine: step 6/6. Functionally, transfers the gamma-phosphate of ATP to the 4'-position of a tetraacyldisaccharide 1-phosphate intermediate (termed DS-1-P) to form tetraacyldisaccharide 1,4'-bis-phosphate (lipid IVA). The sequence is that of Tetraacyldisaccharide 4'-kinase from Mannheimia succiniciproducens (strain KCTC 0769BP / MBEL55E).